The sequence spans 137 residues: ATP synthase epsilon chain, chloroplastic (137 aa).

This sequence belongs to the ATPase epsilon chain family. F-type ATPases have 2 components, CF(1) - the catalytic core - and CF(0) - the membrane proton channel. CF(1) has five subunits: alpha(3), beta(3), gamma(1), delta(1), epsilon(1). CF(0) has three main subunits: a, b and c.

Its subcellular location is the plastid. The protein localises to the chloroplast thylakoid membrane. Its function is as follows. Produces ATP from ADP in the presence of a proton gradient across the membrane. This is ATP synthase epsilon chain, chloroplastic from Oryza nivara (Indian wild rice).